The following is a 339-amino-acid chain: Holliday junction branch migration complex subunit RuvB (339 aa).

Positions 1–187 (MQGFEDENRI…FGVICKLDYY (187 aa)) are large ATPase domain (RuvB-L). Residues leucine 26, arginine 27, glycine 68, lysine 71, threonine 72, threonine 73, 134–136 (EDF), arginine 177, tyrosine 187, and arginine 224 contribute to the ATP site. Threonine 72 contacts Mg(2+). Residues 188 to 258 (TVDELSKIVL…VAKDALELLG (71 aa)) form a small ATPAse domain (RuvB-S) region. The head domain (RuvB-H) stretch occupies residues 261–339 (SLGLDFVDEK…HLKIPYPNEK (79 aa)). Residues arginine 297, arginine 316, and arginine 321 each coordinate DNA.

It belongs to the RuvB family. Homohexamer. Forms an RuvA(8)-RuvB(12)-Holliday junction (HJ) complex. HJ DNA is sandwiched between 2 RuvA tetramers; dsDNA enters through RuvA and exits via RuvB. An RuvB hexamer assembles on each DNA strand where it exits the tetramer. Each RuvB hexamer is contacted by two RuvA subunits (via domain III) on 2 adjacent RuvB subunits; this complex drives branch migration. In the full resolvosome a probable DNA-RuvA(4)-RuvB(12)-RuvC(2) complex forms which resolves the HJ.

It localises to the cytoplasm. It catalyses the reaction ATP + H2O = ADP + phosphate + H(+). The RuvA-RuvB-RuvC complex processes Holliday junction (HJ) DNA during genetic recombination and DNA repair, while the RuvA-RuvB complex plays an important role in the rescue of blocked DNA replication forks via replication fork reversal (RFR). RuvA specifically binds to HJ cruciform DNA, conferring on it an open structure. The RuvB hexamer acts as an ATP-dependent pump, pulling dsDNA into and through the RuvAB complex. RuvB forms 2 homohexamers on either side of HJ DNA bound by 1 or 2 RuvA tetramers; 4 subunits per hexamer contact DNA at a time. Coordinated motions by a converter formed by DNA-disengaged RuvB subunits stimulates ATP hydrolysis and nucleotide exchange. Immobilization of the converter enables RuvB to convert the ATP-contained energy into a lever motion, pulling 2 nucleotides of DNA out of the RuvA tetramer per ATP hydrolyzed, thus driving DNA branch migration. The RuvB motors rotate together with the DNA substrate, which together with the progressing nucleotide cycle form the mechanistic basis for DNA recombination by continuous HJ branch migration. Branch migration allows RuvC to scan DNA until it finds its consensus sequence, where it cleaves and resolves cruciform DNA. The chain is Holliday junction branch migration complex subunit RuvB from Clostridioides difficile (strain 630) (Peptoclostridium difficile).